We begin with the raw amino-acid sequence, 187 residues long: UPF0232 protein MUL_0004 (187 aa).

The span at Met1 to Asp12 shows a compositional bias: gly residues. Disordered regions lie at residues Met1 to Gly77 and Ala166 to Gly187. The span at Ala14 to Ala30 shows a compositional bias: basic and acidic residues. Low complexity predominate over residues Glu31–Arg55.

Belongs to the UPF0232 family.

This is UPF0232 protein MUL_0004 from Mycobacterium ulcerans (strain Agy99).